Reading from the N-terminus, the 447-residue chain is tRNA modification GTPase MnmE (447 aa).

Arg22, Glu81, and Lys121 together coordinate (6S)-5-formyl-5,6,7,8-tetrahydrofolate. The region spanning 217 to 373 (GIVLAITGET…LMSEIVSYAE (157 aa)) is the TrmE-type G domain. Residue Asn227 coordinates K(+). Residues 227–232 (NTGKSS), 246–252 (SDIPGTT), and 271–274 (DTAG) each bind GTP. Ser231 lines the Mg(2+) pocket. The K(+) site is built by Ser246, Ile248, and Thr251. A Mg(2+)-binding site is contributed by Thr252. Lys447 provides a ligand contact to (6S)-5-formyl-5,6,7,8-tetrahydrofolate.

Belongs to the TRAFAC class TrmE-Era-EngA-EngB-Septin-like GTPase superfamily. TrmE GTPase family. As to quaternary structure, homodimer. Heterotetramer of two MnmE and two MnmG subunits. The cofactor is K(+).

The protein localises to the cytoplasm. In terms of biological role, exhibits a very high intrinsic GTPase hydrolysis rate. Involved in the addition of a carboxymethylaminomethyl (cmnm) group at the wobble position (U34) of certain tRNAs, forming tRNA-cmnm(5)s(2)U34. The chain is tRNA modification GTPase MnmE from Orientia tsutsugamushi (strain Boryong) (Rickettsia tsutsugamushi).